We begin with the raw amino-acid sequence, 711 residues long: MNNPLVNQAAMVLPVFLLSACLGGGGSFDLDSVDTEAPRPAPKYQDVSSEKPQAQKDQGGYGFAMRLKRRNWYPGAEESEVKLNESDWEATGLPTKPKELPKRQKSVIEKVETDGDSDIYSSPYLTPSNHQNGSAGNGVNQPKNQATGHENFQYVYSGWFYKHAASEKDFSNKKIKSGDDGYIFYHGEKPSRQLPASGKVIYKGVWHFVTDTKKGQDFREIIQPSKKQGDRYSGFSGDGSEEYSNKNESTLKDDHEGYGFTSNLEVDFGNKKLTGKLIRNNASLNNNTNNDKHTTQYYSLDAQITGNRFNGTATATDKKENETKLHPFVSDSSSLSGGFFGPQGEELGFRFLSDDQKVAVVGSAKTKDKLENGAAASGSTGAAASGGAAGTSSENSKLTTVLDAVELTLNDKKIKNLDNFSNAAQLVVDGIMIPLLPKDSESGNTQADKGKNGGTEFTRKFEHTPESDKKDAQAGTQTNGAQTASNTAGDTNGKTKTYEVEVCCSNLNYLKYGMLTRKNSKSAMQAGGNSSQADAKTEQVEQSMFLQGERTDEKEIPTDQNVVYRGSWYGHIANGTSWSGNASDKEGGNRAEFTVNFADKKITGKLTAENRQAQTFTIEGMIQGNGFEGTAKTAESGFDLDQKNTTRTPKAYITDAKVKGGFYGPKAEELGGWFAYPGDKQTEKATATSSDGNSASSATVVFGAKRQQPVQ.

Positions 1–20 (MNNPLVNQAAMVLPVFLLSA) are cleaved as a signal peptide. The N-palmitoyl cysteine moiety is linked to residue Cys21. Residue Cys21 is the site of S-diacylglycerol cysteine attachment. Disordered regions lie at residues 33–58 (VDTEAPRPAPKYQDVSSEKPQAQKDQ), 79–105 (SEVKLNESDWEATGLPTKPKELPKRQK), 118–146 (DIYSSPYLTPSNHQNGSAGNGVNQPKNQA), 225–251 (SKKQGDRYSGFSGDGSEEYSNKNESTL), 370–396 (LENGAAASGSTGAAASGGAAGTSSENS), 437–492 (PKDS…GDTN), and 682–711 (TEKATATSSDGNSASSATVVFGAKRQQPVQ). Positions 46 to 56 (DVSSEKPQAQK) are enriched in polar residues. The span at 96–105 (KPKELPKRQK) shows a compositional bias: basic and acidic residues. Positions 119-146 (IYSSPYLTPSNHQNGSAGNGVNQPKNQA) are enriched in polar residues. Residues 373–393 (GAAASGSTGAAASGGAAGTSS) are compositionally biased toward low complexity. Residues 457–472 (FTRKFEHTPESDKKDA) are compositionally biased toward basic and acidic residues. 2 stretches are compositionally biased toward polar residues: residues 474 to 492 (AGTQTNGAQTASNTAGDTN) and 684 to 699 (KATATSSDGNSASSAT).

It belongs to the TbpB family. Isotype II subfamily. Binds only human holo-transferrin (TF), via the TF C-terminus. Forms a large complex with TbpA and TF. Interacts via its C-terminal domain with Slam1.

It localises to the cell outer membrane. The protein resides in the cell surface. Functionally, neisseria acquires iron by extracting it from serum transferrin (TF) in its human host. Acts as a TF receptor and is required for TF utilization. Involved in the initial capture of TF. Helps select only those TF molecules that can be used as an iron source and concentrates them on the cell surface, maintaining the iron-loaded status of the TF C-terminal lobe until its delivery to TbpA. In Neisseria meningitidis serogroup B, this protein is Transferrin-binding protein B (tbpB).